The following is a 2904-amino-acid chain: Highly reducing polyketide synthase bet1 (2904 aa).

One can recognise a Ketosynthase family 3 (KS3) domain in the interval asparagine 8 to serine 441. Residues cysteine 181, histidine 320, and histidine 361 each act as for beta-ketoacyl synthase activity in the active site. An acyl transferase (AT) domain region spans residues valine 553–glycine 875. Residues histidine 948–glutamate 1081 form an N-terminal hotdog fold region. One can recognise a PKS/mFAS DH domain in the interval histidine 948–asparagine 1257. The segment at proline 971–alanine 1255 is dehydratase (DH) domain. Catalysis depends on histidine 980, which acts as the Proton acceptor; for dehydratase activity. The C-terminal hotdog fold stretch occupies residues methionine 1098–asparagine 1257. Catalysis depends on aspartate 1159, which acts as the Proton donor; for dehydratase activity. A methyltransferase (cMeT) domain region spans residues lysine 1411–proline 1596. A ketoreductase (KR)domain region spans residues threonine 2125–isoleucine 2298. Residues glutamate 2407–isoleucine 2486 enclose the Carrier domain. Serine 2445 carries the O-(pantetheine 4'-phosphoryl)serine modification. The segment at proline 2492 to valine 2543 is disordered. Residues alanine 2497–valine 2523 are compositionally biased toward polar residues. Residues threonine 2524–serine 2541 show a composition bias toward low complexity. A reductase (R) domain region spans residues leucine 2585–glutamate 2817.

Pantetheine 4'-phosphate serves as cofactor.

The enzyme catalyses 7 malonyl-CoA + acetyl-CoA + 10 AH2 + 5 S-adenosyl-L-methionine + 2 H(+) = dehydroprobetaenone I + 10 A + 5 S-adenosyl-L-homocysteine + 7 CO2 + 8 CoA + 6 H2O. It functions in the pathway mycotoxin biosynthesis. Highly reducing polyketide synthase; part of the gene cluster that mediates the biosynthesis of betaenones, phytotoxic polyketides involved in leaf spot disease in sugar beets. The first step of the pathway is the synthesis of dehydroprobetaenone I by the polyketide synthase bet1 and the enoyl reductase bet3 via condensation of one acetyl-CoA starter unit with 7 malonyl-CoA units and 5 methylations. The C-terminal reductase (R) domain of bet1 catalyzes the reductive release of the polyketide chain. Because bet1 lacks a designated enoylreductase (ER) domain, the required activity is provided the enoyl reductase bet3. The short-chain dehydrogenase/reductase bet4 then catalyzes reduction of dehydroprobetaenone I to probetaenone I. The cytochrome P450 monooxygenase bet2 catalyzes successive epoxidation, oxidation (resulting from epoxide opening) and hydroxylation to install a tertiary alcohol in the decaline ring to yield betaenone C from dehydroprobetaenone I and betaenone B from probetaenone I. The FAD-linked oxidoreductase (orf1) is probably responsible for the conversion of betaenone C to betaenone A via an intramolecular aldol reaction between C-1 and C-17 to form the bridged tricyclic system in betaenone A. This is Highly reducing polyketide synthase bet1 from Neocamarosporium betae (Beet black rot fungus).